The sequence spans 454 residues: UDP-N-acetylmuramoylalanine--D-glutamate ligase (454 aa).

An ATP-binding site is contributed by 116-122 (GTNGKTS).

Belongs to the MurCDEF family.

The protein localises to the cytoplasm. It carries out the reaction UDP-N-acetyl-alpha-D-muramoyl-L-alanine + D-glutamate + ATP = UDP-N-acetyl-alpha-D-muramoyl-L-alanyl-D-glutamate + ADP + phosphate + H(+). The protein operates within cell wall biogenesis; peptidoglycan biosynthesis. In terms of biological role, cell wall formation. Catalyzes the addition of glutamate to the nucleotide precursor UDP-N-acetylmuramoyl-L-alanine (UMA). The chain is UDP-N-acetylmuramoylalanine--D-glutamate ligase from Lachnoclostridium phytofermentans (strain ATCC 700394 / DSM 18823 / ISDg) (Clostridium phytofermentans).